The primary structure comprises 962 residues: Activity-dependent neuroprotective protein 2a (962 aa).

Residues 75–98 (LCCSLCWYSSRSVPTFRSHIHRCH) form a C2H2-type 1 zinc finger. Residues 108 to 130 (LMCPYCPFVSSPKVTEQHIQFFH) form a C2H2-type 2; degenerate zinc finger. Residues 165 to 188 (YTCATCGYHDSLLYVMKKHVLVNH) form a C2H2-type 3; degenerate zinc finger. The segment at 219–244 (YHCKLCKLPAETIEHLLYHILSSEKH) adopts a C2H2-type 4 zinc-finger fold. Residues 527–547 (VKCLRCKILLTEQGIFQHLLH) form a C2H2-type 5; degenerate zinc finger. 2 C2H2-type zinc fingers span residues 549 to 572 (LKCL…KKEH) and 650 to 673 (NACP…QTKH). The segment at 688 to 712 (YKCIYCFGVYTEKSTPKTISIHVQR) adopts a C2H2-type 8; degenerate zinc-finger fold. The interval 753–781 (QGAPEFPKPKKEAVTPRNRRRNTKASKTG) is disordered. Residues 795–854 (PMGMERTSFEDRKDFLSQYFHRKPYVTKTEIELLASRLWINKADVKAHFNSKLTKCLKAI) constitute a DNA-binding region (homeobox).

The protein localises to the nucleus. Functionally, may be involved in transcriptional regulation. Required for progression through late erythroid differentiation. May be involved in vasculogenesis. The sequence is that of Activity-dependent neuroprotective protein 2a from Danio rerio (Zebrafish).